A 170-amino-acid chain; its full sequence is Large ribosomal subunit protein uL11 (170 aa).

This sequence belongs to the universal ribosomal protein uL11 family. Part of the ribosomal stalk of the 50S ribosomal subunit. Interacts with L10 and the large rRNA to form the base of the stalk. L10 forms an elongated spine to which L12 dimers bind in a sequential fashion forming a multimeric L10(L12)X complex.

Its function is as follows. Forms part of the ribosomal stalk which helps the ribosome interact with GTP-bound translation factors. This Saccharolobus islandicus (strain M.14.25 / Kamchatka #1) (Sulfolobus islandicus) protein is Large ribosomal subunit protein uL11.